The sequence spans 439 residues: ATP-dependent RNA helicase RhlB (439 aa).

The Q motif signature appears at 9–37 (QKFADLPLHPEVKQALAENGFEFCTPIQA). In terms of domain architecture, Helicase ATP-binding spans 40–219 (LPVLLQSKDI…YDHMNDPVKV (180 aa)). 53–60 (AQTGTGKT) lines the ATP pocket. Residues 165 to 168 (DEAD) carry the DEAD box motif. Positions 243–390 (KMRLLLTLIE…VSNYDSSALL (148 aa)) constitute a Helicase C-terminal domain. Residues 398–439 (KIPRKHPAGTRNLRERAGAGRPQGAHRSGGRPPRHDRTRRHS) form a disordered region. Positions 425–439 (SGGRPPRHDRTRRHS) are enriched in basic residues.

It belongs to the DEAD box helicase family. RhlB subfamily. As to quaternary structure, component of the RNA degradosome, which is a multiprotein complex involved in RNA processing and mRNA degradation.

It localises to the cytoplasm. It catalyses the reaction ATP + H2O = ADP + phosphate + H(+). In terms of biological role, DEAD-box RNA helicase involved in RNA degradation. Has RNA-dependent ATPase activity and unwinds double-stranded RNA. This is ATP-dependent RNA helicase RhlB from Shewanella putrefaciens (strain CN-32 / ATCC BAA-453).